A 503-amino-acid chain; its full sequence is Arabinose import ATP-binding protein AraG (503 aa).

ABC transporter domains follow at residues 5–240 (LRFD…MVGR) and 253–497 (LGDV…LPQG). An ATP-binding site is contributed by 37–44 (GENGAGKS).

This sequence belongs to the ABC transporter superfamily. Arabinose importer (TC 3.A.1.2.2) family. As to quaternary structure, the complex is composed of two ATP-binding proteins (AraG), two transmembrane proteins (AraH) and a solute-binding protein (AraF).

The protein resides in the cell inner membrane. The enzyme catalyses L-arabinose(out) + ATP + H2O = L-arabinose(in) + ADP + phosphate + H(+). Its function is as follows. Part of the ABC transporter complex AraFGH involved in arabinose import. Responsible for energy coupling to the transport system. This is Arabinose import ATP-binding protein AraG from Burkholderia pseudomallei (strain K96243).